The chain runs to 47 residues: Large ribosomal subunit protein bL34 (47 aa).

Belongs to the bacterial ribosomal protein bL34 family.

This is Large ribosomal subunit protein bL34 from Mycobacteroides abscessus (strain ATCC 19977 / DSM 44196 / CCUG 20993 / CIP 104536 / JCM 13569 / NCTC 13031 / TMC 1543 / L948) (Mycobacterium abscessus).